The chain runs to 329 residues: Strigolactones hydrolase CXE15 (329 aa).

Residues 83 to 85 (HGG) carry the Involved in the stabilization of the negatively charged intermediate by the formation of the oxyanion hole motif. Positions 85, 86, 169, and 170 each coordinate (-)-2'-epi-GR24. Catalysis depends on Ser-169, which acts as the Nucleophile. Catalysis depends on residues Glu-271 and His-302.

This sequence belongs to the 'GDXG' lipolytic enzyme family. As to expression, expressed in axillary buds, leaves, stems, hypocotyls, flowers, siliques, and vasculatures of shoots and roots.

It localises to the nucleus. The protein localises to the cytoplasm. The protein resides in the cytosol. The enzyme catalyses (-)-2'-epi-GR24 + H2O = (-)-2'-epi-GR24 ABC-rings + 5-hydroxy-3-methylfuran-2(5H)-one. The catalysed reaction is 5-deoxystrigol + H2O = 5-deoxystrigol ABC-rings + 5-hydroxy-3-methylfuran-2(5H)-one. It carries out the reaction orobanchol + H2O = orobanchol ABC-rings + 5-hydroxy-3-methylfuran-2(5H)-one. Its function is as follows. Binds to strigolactones (SLs) such as (-)-2'-epi-GR24(4DO), 5-deoxystrigol (5DS) and orobanchol, and catalyzes their hydrolysis; SL are phytohormones controlling shoot branching and communications between plants and microorganisms. Promotes shoot branching by dampening SL-inhibited axillary bud outgrowth. This is Strigolactones hydrolase CXE15 from Arabidopsis thaliana (Mouse-ear cress).